The chain runs to 169 residues: S-ribosylhomocysteine lyase (169 aa).

Residues H54, H58, and C129 each contribute to the Fe cation site.

Belongs to the LuxS family. In terms of assembly, homodimer. It depends on Fe cation as a cofactor.

It carries out the reaction S-(5-deoxy-D-ribos-5-yl)-L-homocysteine = (S)-4,5-dihydroxypentane-2,3-dione + L-homocysteine. Its function is as follows. Involved in the synthesis of autoinducer 2 (AI-2) which is secreted by bacteria and is used to communicate both the cell density and the metabolic potential of the environment. The regulation of gene expression in response to changes in cell density is called quorum sensing. Catalyzes the transformation of S-ribosylhomocysteine (RHC) to homocysteine (HC) and 4,5-dihydroxy-2,3-pentadione (DPD). The sequence is that of S-ribosylhomocysteine lyase from Haemophilus ducreyi (strain 35000HP / ATCC 700724).